Consider the following 201-residue polypeptide: Molybdenum cofactor guanylyltransferase (201 aa).

Residues 14–16, lysine 31, and aspartate 104 each bind GTP; that span reads LAG. Aspartate 104 is a binding site for Mg(2+).

It belongs to the MobA family. As to quaternary structure, monomer. Requires Mg(2+) as cofactor.

It is found in the cytoplasm. It catalyses the reaction Mo-molybdopterin + GTP + H(+) = Mo-molybdopterin guanine dinucleotide + diphosphate. In terms of biological role, transfers a GMP moiety from GTP to Mo-molybdopterin (Mo-MPT) cofactor (Moco or molybdenum cofactor) to form Mo-molybdopterin guanine dinucleotide (Mo-MGD) cofactor. This Helicobacter pylori (strain ATCC 700392 / 26695) (Campylobacter pylori) protein is Molybdenum cofactor guanylyltransferase.